Here is a 125-residue protein sequence, read N- to C-terminus: uncharacterized protein (125 aa).

A disordered region spans residues methionine 1 to serine 21. A compositionally biased stretch (low complexity) spans serine 7–serine 21.

This is an uncharacterized protein from Saccharomyces cerevisiae (strain ATCC 204508 / S288c) (Baker's yeast).